The following is a 516-amino-acid chain: Potassium voltage-gated channel subfamily A member 10 (516 aa).

A helical membrane pass occupies residues 223 to 244 (VALVSVLVIVISIIIFCMETLP). Asn261 carries N-linked (GlcNAc...) asparagine glycosylation. The chain crosses the membrane as a helical span at residues 276–296 (FFVIETACIIWFSFELFVRFI). A helical membrane pass occupies residues 308 to 328 (IMNIIDIVSIIPYFVTLTTEL). N-linked (GlcNAc...) asparagine glycosylation is present at Asn339. Residues 344 to 363 (ILRIIRLVRVFRIFKLSRHS) form a helical; Voltage-sensor membrane-spanning segment. Residues 380-400 (LGLLIFFLFIGVILFSSAVYF) traverse the membrane as a helical segment. The short motif at 426 to 431 (TVGYGD) is the Selectivity filter element. The chain crosses the membrane as a helical span at residues 441-461 (IVGTLCAIAGVLTIALPVPVI). Asn503 carries an N-linked (GlcNAc...) asparagine glycan.

The protein belongs to the potassium channel family. A (Shaker) (TC 1.A.1.2) subfamily. Kv1.8/KCNA10 sub-subfamily. Homotetramer. In terms of tissue distribution, detected in brain, cochlear sensory epithelium, cochlear ganglion, tegumentum vasculosum. Detected at low levels in cochlear lagena.

It localises to the membrane. It catalyses the reaction K(+)(in) = K(+)(out). With respect to regulation, the channel activity is up-regulated by cAMP. In terms of biological role, voltage-gated potassium ion channel that mediates K(+) permeability of excitable membranes. When opened in response to the voltage difference across the membrane, KCNA10 channel selectively allows the flow of potassium ions across the membrane down their electrochemical gradient. The chain is Potassium voltage-gated channel subfamily A member 10 (KCNA10) from Gallus gallus (Chicken).